Reading from the N-terminus, the 251-residue chain is Imidazole glycerol phosphate synthase subunit HisF (251 aa).

Residues aspartate 11 and aspartate 130 contribute to the active site.

Belongs to the HisA/HisF family. In terms of assembly, heterodimer of HisH and HisF.

It localises to the cytoplasm. It catalyses the reaction 5-[(5-phospho-1-deoxy-D-ribulos-1-ylimino)methylamino]-1-(5-phospho-beta-D-ribosyl)imidazole-4-carboxamide + L-glutamine = D-erythro-1-(imidazol-4-yl)glycerol 3-phosphate + 5-amino-1-(5-phospho-beta-D-ribosyl)imidazole-4-carboxamide + L-glutamate + H(+). It functions in the pathway amino-acid biosynthesis; L-histidine biosynthesis; L-histidine from 5-phospho-alpha-D-ribose 1-diphosphate: step 5/9. Functionally, IGPS catalyzes the conversion of PRFAR and glutamine to IGP, AICAR and glutamate. The HisF subunit catalyzes the cyclization activity that produces IGP and AICAR from PRFAR using the ammonia provided by the HisH subunit. The polypeptide is Imidazole glycerol phosphate synthase subunit HisF (Chlorobium chlorochromatii (strain CaD3)).